Consider the following 644-residue polypeptide: MPIITRLPDSVANKISAGEVVQRPASVVKELLENAIDAGATKISVTIKDAGKELIRIADNGVGMNRDDALLCVERFATSKIKSADDLDALHTLGFRGEALASICSVSHFELKTRQADATLGLLFRYDGGSLVEELEVQAEQGTSFSVRNLFYNVPARRKFLKSNATEYHHLFEIVKSFTLAYPEIEWRMVNDDEELFNFKNNDVLERLNFYYGDDFASSLIEVAEQNDYLPIHGYLGKPALQKKRKLEQYFFINRRLVQNRMLLQAVQQAYGDLLVERQTPFVLLFLTIDPSRIDVNVHPAKLEIRFDDERQVRSMFYPVIKRAVQLHDFSTNISVIEPFASASEPFVGSSSQPIFSSTSSQAPRMGGGSRRFDLSDAPERAITKNELYRNYREGAFSSPSVASYDAPSPLQQGGLFALASAEESLFGAQAVHEASENIEAFQLSPLDNIVEHKEVEPKIWQLHNKYLICQIKTGLMIIDQHVAHERVLYERALEVMQQNVPNAQQLLFPQKVEFRAWEYEVFEEIRDDLYRLGFNVRLFGNRTVMIEGVPQDVKSGSEVTILQDMITQYQENATKLKLERRDNLAKSYSCRNAIMTGQKLSMEEMRSLIDNLFATREPYTCPHGRPIIIKLSLDQLDKMFGRK.

This sequence belongs to the DNA mismatch repair MutL/HexB family.

Its function is as follows. This protein is involved in the repair of mismatches in DNA. It is required for dam-dependent methyl-directed DNA mismatch repair. May act as a 'molecular matchmaker', a protein that promotes the formation of a stable complex between two or more DNA-binding proteins in an ATP-dependent manner without itself being part of a final effector complex. This is DNA mismatch repair protein MutL from Chlorobium chlorochromatii (strain CaD3).